A 244-amino-acid chain; its full sequence is Transcription factor A, mitochondrial (244 aa).

The N-terminal 42 residues, 1–42 (MALFRGMWGVLRTLGRTGVEMCAGCGGRIPSPVSLICIPKCF), are a transit peptide targeting the mitochondrion. Positions 49–117 (PKKPMSSYLR…VYKEAVSKYK (69 aa)) form a DNA-binding region, HMG box 1. Phosphoserine; by PKA is present on residues Ser-54, Ser-55, and Ser-60. Position 66 is an N6-succinyllysine (Lys-66). Thr-121 carries the phosphothreonine modification. A DNA-binding region (HMG box 2) is located at residues 154 to 218 (PKRPRSAYNI…RYDNEMKSWE (65 aa)). Ser-159 carries the phosphoserine; by PKA modification. Position 192 is a phosphoserine (Ser-192). The disordered stretch occupies residues 221–244 (MAEVGRSDLIRRSVKRPPGDISEN).

Monomer; binds DNA as a monomer. Homodimer. Component of the mitochondrial transcription initiation complex, composed at least of TFB2M, TFAM and POLRMT. In this complex TFAM recruits POLRMT to the promoter whereas TFB2M induces structural changes in POLRMT to enable promoter opening and trapping of the DNA non-template strand. Upon metabolic stress, forms a complex composed of FOXO3, SIRT3, TFAM and POLRMT. Interacts with TFB1M and TFB2M. Interacts with CLPX; this enhances DNA-binding. In terms of processing, phosphorylation by PKA within the HMG box 1 impairs DNA binding and promotes degradation by the AAA+ Lon protease. In terms of tissue distribution, the mitochondrial isoform is widely expressed while the nuclear isoform is testis-specific.

It is found in the mitochondrion. The protein localises to the mitochondrion matrix. Its subcellular location is the mitochondrion nucleoid. It localises to the nucleus. Functionally, binds to the mitochondrial light strand promoter and functions in mitochondrial transcription regulation. Component of the mitochondrial transcription initiation complex, composed at least of TFB2M, TFAM and POLRMT that is required for basal transcription of mitochondrial DNA. In this complex, TFAM recruits POLRMT to a specific promoter whereas TFB2M induces structural changes in POLRMT to enable promoter opening and trapping of the DNA non-template strand. Required for accurate and efficient promoter recognition by the mitochondrial RNA polymerase. Promotes transcription initiation from the HSP1 and the light strand promoter by binding immediately upstream of transcriptional start sites. Is able to unwind DNA. Bends the mitochondrial light strand promoter DNA into a U-turn shape via its HMG boxes. Required for maintenance of normal levels of mitochondrial DNA. May play a role in organizing and compacting mitochondrial DNA. Its function is as follows. May also function as a transcriptional activator or may have a structural role in the compaction of nuclear DNA during spermatogenesis. The protein is Transcription factor A, mitochondrial of Rattus norvegicus (Rat).